The following is a 390-amino-acid chain: Alkanesulfonate monooxygenase 1 (390 aa).

Positions 364 to 390 (TGSSVNTGPFGETIAGDHRPKSLASAS) are disordered.

The protein belongs to the SsuD family.

The catalysed reaction is an alkanesulfonate + FMNH2 + O2 = an aldehyde + FMN + sulfite + H2O + 2 H(+). Catalyzes the desulfonation of aliphatic sulfonates. The sequence is that of Alkanesulfonate monooxygenase 1 (ssuD1) from Mesorhizobium japonicum (strain LMG 29417 / CECT 9101 / MAFF 303099) (Mesorhizobium loti (strain MAFF 303099)).